Consider the following 158-residue polypeptide: MKTPPVLKRRREGVTDYRKRYRLVISRETRAVIRQTRKGLIIQLVDYVPEGDHVLVTVTNKTLKKALNIDGNNIQMYYLAGYMAAKKGISLGISGAVVDTGRAIFRKGGRIAAAIKGLIDGGLEINADEDIFPDESRLNGEHLKQRLDINEIKSKIGE.

Belongs to the universal ribosomal protein uL18 family. In terms of assembly, part of the 50S ribosomal subunit. Contacts the 5S and 23S rRNAs.

Functionally, this is one of the proteins that bind and probably mediate the attachment of the 5S RNA into the large ribosomal subunit, where it forms part of the central protuberance. This Picrophilus torridus (strain ATCC 700027 / DSM 9790 / JCM 10055 / NBRC 100828 / KAW 2/3) protein is Large ribosomal subunit protein uL18.